The following is a 601-amino-acid chain: ATP-dependent lipid A-core flippase (601 aa).

The region spanning 28–328 (LLSVVGLIVY…LTRVNAEFQR (301 aa)) is the ABC transmembrane type-1 domain. 6 helical membrane-spanning segments follow: residues 32–52 (VGLI…GPFI), 81–101 (VLLM…FANF), 160–180 (ALIS…LMFY), 183–203 (WKLS…ITIV), 267–287 (AVSQ…VLYA), and 296–316 (DLTA…LQPI). The 238-residue stretch at 360–597 (LRFDNVSFSY…GGMYAKLYQM (238 aa)) folds into the ABC transporter domain. 394-401 (GRSGSGKS) lines the ATP pocket.

Belongs to the ABC transporter superfamily. Lipid exporter (TC 3.A.1.106) family. Homodimer.

It localises to the cell inner membrane. It catalyses the reaction ATP + H2O + lipid A-core oligosaccharideSide 1 = ADP + phosphate + lipid A-core oligosaccharideSide 2.. Its function is as follows. Involved in lipopolysaccharide (LPS) biosynthesis. Translocates lipid A-core from the inner to the outer leaflet of the inner membrane. Transmembrane domains (TMD) form a pore in the inner membrane and the ATP-binding domain (NBD) is responsible for energy generation. The protein is ATP-dependent lipid A-core flippase of Shewanella oneidensis (strain ATCC 700550 / JCM 31522 / CIP 106686 / LMG 19005 / NCIMB 14063 / MR-1).